A 143-amino-acid chain; its full sequence is 3-hydroxyacyl-[acyl-carrier-protein] dehydratase FabZ (143 aa).

Residue His-47 is part of the active site.

This sequence belongs to the thioester dehydratase family. FabZ subfamily.

Its subcellular location is the cytoplasm. It carries out the reaction a (3R)-hydroxyacyl-[ACP] = a (2E)-enoyl-[ACP] + H2O. Its function is as follows. Involved in unsaturated fatty acids biosynthesis. Catalyzes the dehydration of short chain beta-hydroxyacyl-ACPs and long chain saturated and unsaturated beta-hydroxyacyl-ACPs. The protein is 3-hydroxyacyl-[acyl-carrier-protein] dehydratase FabZ of Rickettsia canadensis (strain McKiel).